The chain runs to 427 residues: Dorsalin-1 (427 aa).

The N-terminal stretch at 1–20 (MHYFGVLAALSVFNIIACLT) is a signal peptide. Residues 21–318 (RGKPLENWKK…PRQHSSRSKR (298 aa)) constitute a propeptide that is removed on maturation. 4 N-linked (GlcNAc...) asparagine glycosylation sites follow: asparagine 71, asparagine 136, asparagine 265, and asparagine 292. The interval 288 to 321 (KLGKNDSSSEEEQREEKAIARPRQHSSRSKRSIG) is disordered. A compositionally biased stretch (basic residues) spans 307–321 (ARPRQHSSRSKRSIG). Cystine bridges form between cysteine 325–cysteine 391, cysteine 354–cysteine 424, and cysteine 358–cysteine 426.

This sequence belongs to the TGF-beta family. Homodimer; disulfide-linked. As to expression, expressed selectively in the dorsal neural tube. Lower levels seen in kidney and myotomal cells.

Its subcellular location is the secreted. Functionally, appears to regulate cell differentiation within the neural tube. May regulate the differentiation of cell types along the dorsoventral axis of the neural tube, acting in conjunction with distinct ventralizing signals from the notochord and floor plate. Controls the cell differentiation in the neural tube in several ways: (1) promotes the differentiation of cell types that derive from the dorsal neural tube. (2) ensures that the dorsal neural tube is refractory to ventralizing species from the notochord. (3) can diffuse and influence the fate of cells in more ventral regions of the neural tube. The polypeptide is Dorsalin-1 (DSL1) (Gallus gallus (Chicken)).